The following is a 494-amino-acid chain: UDP-N-acetylmuramoyl-L-alanyl-D-glutamate--L-lysine ligase (494 aa).

S30 provides a ligand contact to UDP-N-acetyl-alpha-D-muramoyl-L-alanyl-D-glutamate. Position 110–116 (110–116 (GTNGKTS)) interacts with ATP. Residues 152–153 (TT), S179, and R187 each bind UDP-N-acetyl-alpha-D-muramoyl-L-alanyl-D-glutamate. K219 is modified (N6-carboxylysine). Residues 406–409 (DNPA) carry the L-lysine recognition motif motif.

Belongs to the MurCDEF family. MurE subfamily. In terms of processing, carboxylation is probably crucial for Mg(2+) binding and, consequently, for the gamma-phosphate positioning of ATP.

It localises to the cytoplasm. The catalysed reaction is UDP-N-acetyl-alpha-D-muramoyl-L-alanyl-D-glutamate + L-lysine + ATP = UDP-N-acetyl-alpha-D-muramoyl-L-alanyl-gamma-D-glutamyl-L-lysine + ADP + phosphate + H(+). Its pathway is cell wall biogenesis; peptidoglycan biosynthesis. Functionally, catalyzes the addition of L-lysine to the nucleotide precursor UDP-N-acetylmuramoyl-L-alanyl-D-glutamate (UMAG) in the biosynthesis of bacterial cell-wall peptidoglycan. In Staphylococcus aureus (strain Mu3 / ATCC 700698), this protein is UDP-N-acetylmuramoyl-L-alanyl-D-glutamate--L-lysine ligase.